The primary structure comprises 174 residues: Endoribonuclease YbeY (174 aa).

Residues histidine 129, histidine 133, and histidine 139 each contribute to the Zn(2+) site.

It belongs to the endoribonuclease YbeY family. Zn(2+) serves as cofactor.

It localises to the cytoplasm. In terms of biological role, single strand-specific metallo-endoribonuclease involved in late-stage 70S ribosome quality control and in maturation of the 3' terminus of the 16S rRNA. The polypeptide is Endoribonuclease YbeY (Lactobacillus acidophilus (strain ATCC 700396 / NCK56 / N2 / NCFM)).